Consider the following 41-residue polypeptide: Large ribosomal subunit protein bL36 (41 aa).

Belongs to the bacterial ribosomal protein bL36 family.

This Rickettsia canadensis (strain McKiel) protein is Large ribosomal subunit protein bL36.